A 411-amino-acid chain; its full sequence is Arginine deiminase (411 aa).

Cys-401 (amidino-cysteine intermediate) is an active-site residue.

This sequence belongs to the arginine deiminase family. In terms of processing, glycosylated.

The protein resides in the cytoplasm. It catalyses the reaction L-arginine + H2O = L-citrulline + NH4(+). It functions in the pathway amino-acid degradation; L-arginine degradation via ADI pathway; carbamoyl phosphate from L-arginine: step 1/2. The sequence is that of Arginine deiminase from Streptococcus pyogenes serotype M3 (strain ATCC BAA-595 / MGAS315).